The primary structure comprises 151 residues: MGRMHAPGKGLSQSALPYRRSVPTWLKLTSDDVKEQIFKLAKKGLTPSQIGVILRDSHGVAQVRFVTGNKILRILKSKGLAPDLPEDLYHLIKKAVAVRKHLERNRKDKDAKFRLILIESRIHRLARYYKTKRVLAPNWKYXSSTASALVA.

This sequence belongs to the universal ribosomal protein uS15 family. As to quaternary structure, component of the small ribosomal subunit.

The protein resides in the cytoplasm. Component of the small ribosomal subunit. The ribosome is a large ribonucleoprotein complex responsible for the synthesis of proteins in the cell. The protein is Small ribosomal subunit protein uS15 (rps13) of Gillichthys mirabilis (Long-jawed mudsucker).